The sequence spans 222 residues: MANVDVLDLGGKKVGSLELADELFAPSEVNEALLWEAVKHYRASLRQGTHATKNKKLVSGSGKKLWKQKGTGRARVGSVRSPLWRHGGTVHGPQPRSYDYAFPKKKLMGALRSALAAKLADGKLIVVESFEVSEPKTKLYRTALDKLEANRSTLLVESSQSLTENLYLGARNLANVELVLNNEVHPYDLLRYERAIFSRAAIEKLQESLQKTVSRRRKAEVA.

It belongs to the universal ribosomal protein uL4 family. As to quaternary structure, part of the 50S ribosomal subunit.

Its function is as follows. One of the primary rRNA binding proteins, this protein initially binds near the 5'-end of the 23S rRNA. It is important during the early stages of 50S assembly. It makes multiple contacts with different domains of the 23S rRNA in the assembled 50S subunit and ribosome. Functionally, forms part of the polypeptide exit tunnel. This chain is Large ribosomal subunit protein uL4, found in Acidobacterium capsulatum (strain ATCC 51196 / DSM 11244 / BCRC 80197 / JCM 7670 / NBRC 15755 / NCIMB 13165 / 161).